The following is a 377-amino-acid chain: Nitric oxide reductase FlRd-NAD(+) reductase (377 aa).

The protein belongs to the FAD-dependent oxidoreductase family. FAD is required as a cofactor.

The protein resides in the cytoplasm. The enzyme catalyses 2 reduced [nitric oxide reductase rubredoxin domain] + NAD(+) + H(+) = 2 oxidized [nitric oxide reductase rubredoxin domain] + NADH. It functions in the pathway nitrogen metabolism; nitric oxide reduction. One of at least two accessory proteins for anaerobic nitric oxide (NO) reductase. Reduces the rubredoxin moiety of NO reductase. The sequence is that of Nitric oxide reductase FlRd-NAD(+) reductase from Escherichia coli O45:K1 (strain S88 / ExPEC).